Here is a 271-residue protein sequence, read N- to C-terminus: L-aspartate dehydrogenase (271 aa).

The NAD(+) site is built by alanine 124 and asparagine 192. Residue histidine 222 is part of the active site.

The protein belongs to the L-aspartate dehydrogenase family.

It catalyses the reaction L-aspartate + NADP(+) + H2O = oxaloacetate + NH4(+) + NADPH + H(+). It carries out the reaction L-aspartate + NAD(+) + H2O = oxaloacetate + NH4(+) + NADH + H(+). Its pathway is cofactor biosynthesis; NAD(+) biosynthesis; iminoaspartate from L-aspartate (dehydrogenase route): step 1/1. Its function is as follows. Specifically catalyzes the NAD or NADP-dependent dehydrogenation of L-aspartate to iminoaspartate. This chain is L-aspartate dehydrogenase, found in Methanosarcina barkeri (strain Fusaro / DSM 804).